The chain runs to 422 residues: Serine hydroxymethyltransferase (422 aa).

Residues Leu-119 and 123-125 (GHL) each bind (6S)-5,6,7,8-tetrahydrofolate. Lys-228 bears the N6-(pyridoxal phosphate)lysine mark. Residues Glu-244 and 352 to 354 (SPF) contribute to the (6S)-5,6,7,8-tetrahydrofolate site.

It belongs to the SHMT family. Homodimer. Pyridoxal 5'-phosphate serves as cofactor.

It is found in the cytoplasm. The catalysed reaction is (6R)-5,10-methylene-5,6,7,8-tetrahydrofolate + glycine + H2O = (6S)-5,6,7,8-tetrahydrofolate + L-serine. Its pathway is one-carbon metabolism; tetrahydrofolate interconversion. It participates in amino-acid biosynthesis; glycine biosynthesis; glycine from L-serine: step 1/1. Catalyzes the reversible interconversion of serine and glycine with tetrahydrofolate (THF) serving as the one-carbon carrier. This reaction serves as the major source of one-carbon groups required for the biosynthesis of purines, thymidylate, methionine, and other important biomolecules. Also exhibits THF-independent aldolase activity toward beta-hydroxyamino acids, producing glycine and aldehydes, via a retro-aldol mechanism. In Magnetococcus marinus (strain ATCC BAA-1437 / JCM 17883 / MC-1), this protein is Serine hydroxymethyltransferase.